The chain runs to 139 residues: Histone H2B (139 aa).

Over residues 1–10 the composition is skewed to basic and acidic residues; sequence MAPKVAEKKP. Residues 1-47 are disordered; the sequence is MAPKVAEKKPSLAGKAPAGKAPAEKKEAGKKTTTATGEKKKRTKARK. An N6-acetyllysine; alternate mark is found at K8 and K9. Residues K8 and K9 each participate in a glycyl lysine isopeptide (Lys-Gly) (interchain with G-Cter in SUMO); alternate cross-link. The residue at position 15 (K15) is an N6-acetyllysine. N6-acetyllysine; alternate is present on K25. K25 is covalently cross-linked (Glycyl lysine isopeptide (Lys-Gly) (interchain with G-Cter in SUMO); alternate). Residue K26 forms a Glycyl lysine isopeptide (Lys-Gly) (interchain with G-Cter in SUMO) linkage. K133 is covalently cross-linked (Glycyl lysine isopeptide (Lys-Gly) (interchain with G-Cter in ubiquitin)).

Belongs to the histone H2B family. In terms of assembly, the nucleosome is a histone octamer containing two molecules each of H2A, H2B, H3 and H4 assembled in one H3-H4 heterotetramer and two H2A-H2B heterodimers. The octamer wraps approximately 147 bp of DNA. Monoubiquitinated by the UBC2-BRE1 complex to form H2BK123ub1. H2BK123ub1 gives a specific tag for epigenetic transcriptional activation and is also prerequisite for H3K4me and H3K79me formation. H2BK123ub1 also modulates the formation of double-strand breaks during meiosis and is a prerequisite for DNA-damage checkpoint activation. Post-translationally, acetylated by GCN5 to form H2BK11ac and H2BK16ac. H2BK16ac can also be formed by ESA1. Acetylation of N-terminal lysines and particularly formation of H2BK11acK16ac has a positive effect on transcription. In terms of processing, sumoylation to form H2BK6su or H2BK7su, and probably also H2BK16su or H2BK17su, occurs preferentially near the telomeres and represses gene transcription.

It localises to the nucleus. It is found in the chromosome. Core component of nucleosome. Nucleosomes wrap and compact DNA into chromatin, limiting DNA accessibility to the cellular machineries which require DNA as a template. Histones thereby play a central role in transcription regulation, DNA repair, DNA replication and chromosomal stability. DNA accessibility is regulated via a complex set of post-translational modifications of histones, also called histone code, and nucleosome remodeling. The polypeptide is Histone H2B (HTB1) (Yarrowia lipolytica (strain CLIB 122 / E 150) (Yeast)).